Reading from the N-terminus, the 353-residue chain is Phospho-N-acetylmuramoyl-pentapeptide-transferase (353 aa).

The next 10 helical transmembrane spans lie at 24 to 44, 66 to 86, 88 to 108, 129 to 149, 160 to 180, 192 to 212, 229 to 249, 256 to 276, 281 to 301, and 330 to 350; these read LGFFIAFFLTLFLMPKFILWA, TPTMGGIVFVFATIVASVLCA, LGNLYVLLGMIVLVGFSFVGF, FGMLFVLSLVVSVLLSLKGLD, PLFEMPTILAVGFWVLVFLST, GLASVPSIFTLLSLSIFVYVA, VGELFVISLALVGSLFGFLWY, VFMGDSGSLALGGFIAYNAIV, ILLVLMGLIFVVETLSVILQV, and KVIVRFWIISMLSNLVALLSL.

Belongs to the glycosyltransferase 4 family. MraY subfamily. Mg(2+) serves as cofactor.

It localises to the cell inner membrane. It carries out the reaction UDP-N-acetyl-alpha-D-muramoyl-L-alanyl-gamma-D-glutamyl-meso-2,6-diaminopimeloyl-D-alanyl-D-alanine + di-trans,octa-cis-undecaprenyl phosphate = di-trans,octa-cis-undecaprenyl diphospho-N-acetyl-alpha-D-muramoyl-L-alanyl-D-glutamyl-meso-2,6-diaminopimeloyl-D-alanyl-D-alanine + UMP. It functions in the pathway cell wall biogenesis; peptidoglycan biosynthesis. Catalyzes the initial step of the lipid cycle reactions in the biosynthesis of the cell wall peptidoglycan: transfers peptidoglycan precursor phospho-MurNAc-pentapeptide from UDP-MurNAc-pentapeptide onto the lipid carrier undecaprenyl phosphate, yielding undecaprenyl-pyrophosphoryl-MurNAc-pentapeptide, known as lipid I. This Helicobacter pylori (strain Shi470) protein is Phospho-N-acetylmuramoyl-pentapeptide-transferase.